The chain runs to 80 residues: RNA-binding protein Hfq (80 aa).

One can recognise a Sm domain in the interval Asp-10–Met-70.

Belongs to the Hfq family. In terms of assembly, homohexamer.

Its function is as follows. RNA chaperone that binds small regulatory RNA (sRNAs) and mRNAs to facilitate mRNA translational regulation in response to envelope stress, environmental stress and changes in metabolite concentrations. Also binds with high specificity to tRNAs. The chain is RNA-binding protein Hfq from Agrobacterium fabrum (strain C58 / ATCC 33970) (Agrobacterium tumefaciens (strain C58)).